A 503-amino-acid polypeptide reads, in one-letter code: Probable cytosol aminopeptidase (503 aa).

Positions 270 and 275 each coordinate Mn(2+). Residue Lys282 is part of the active site. Mn(2+)-binding residues include Asp293, Asp352, and Glu354. Arg356 is an active-site residue.

The protein belongs to the peptidase M17 family. It depends on Mn(2+) as a cofactor.

It is found in the cytoplasm. It catalyses the reaction Release of an N-terminal amino acid, Xaa-|-Yaa-, in which Xaa is preferably Leu, but may be other amino acids including Pro although not Arg or Lys, and Yaa may be Pro. Amino acid amides and methyl esters are also readily hydrolyzed, but rates on arylamides are exceedingly low.. The catalysed reaction is Release of an N-terminal amino acid, preferentially leucine, but not glutamic or aspartic acids.. Functionally, presumably involved in the processing and regular turnover of intracellular proteins. Catalyzes the removal of unsubstituted N-terminal amino acids from various peptides. The sequence is that of Probable cytosol aminopeptidase from Klebsiella pneumoniae (strain 342).